Here is a 936-residue protein sequence, read N- to C-terminus: 2-oxoglutarate dehydrogenase E1 component (936 aa).

It belongs to the alpha-ketoglutarate dehydrogenase family. In terms of assembly, homodimer. Part of the 2-oxoglutarate dehydrogenase (OGDH) complex composed of E1 (2-oxoglutarate dehydrogenase), E2 (dihydrolipoamide succinyltransferase) and E3 (dihydrolipoamide dehydrogenase); the complex contains multiple copies of the three enzymatic components (E1, E2 and E3). Requires thiamine diphosphate as cofactor.

It carries out the reaction N(6)-[(R)-lipoyl]-L-lysyl-[protein] + 2-oxoglutarate + H(+) = N(6)-[(R)-S(8)-succinyldihydrolipoyl]-L-lysyl-[protein] + CO2. E1 component of the 2-oxoglutarate dehydrogenase (OGDH) complex which catalyzes the decarboxylation of 2-oxoglutarate, the first step in the conversion of 2-oxoglutarate to succinyl-CoA and CO(2). The protein is 2-oxoglutarate dehydrogenase E1 component (sucA) of Rickettsia prowazekii (strain Madrid E).